The following is a 181-amino-acid chain: Lysozyme A (181 aa).

The N-terminal stretch at 1–19 (MRIAFFLLVLAVIIGFAYG) is a signal peptide. Residues 139 to 181 (LTDSRPLGPFNVTESEMAQLFIDHEIAMAQCEAEKTCNGFDLE) constitute a propeptide that is removed on maturation.

This sequence belongs to the dictyostelium lysozyme family. Post-translationally, contains six disulfide bonds.

The protein resides in the cytoplasmic vesicle lumen. It carries out the reaction Hydrolysis of 1,4-beta-linkages between N-acetylmuramic acid and N-acetyl-D-glucosamine residues in a peptidoglycan.. Functionally, has antibacterial activity against the Gram-positive bacteria B.subtilis, B.megaterium and M.luteus. No antibacterial activity detected against the Gram-positive bacterium S.aureus or against the Gram-negative bacterium E.coli. Lacks chitinase activity. The chain is Lysozyme A from Dictyostelium discoideum (Social amoeba).